A 353-amino-acid chain; its full sequence is Protein RecA (353 aa).

ATP is bound at residue 67 to 74 (GPESSGKT).

Belongs to the RecA family.

Its subcellular location is the cytoplasm. Can catalyze the hydrolysis of ATP in the presence of single-stranded DNA, the ATP-dependent uptake of single-stranded DNA by duplex DNA, and the ATP-dependent hybridization of homologous single-stranded DNAs. It interacts with LexA causing its activation and leading to its autocatalytic cleavage. The sequence is that of Protein RecA from Chlamydia pneumoniae (Chlamydophila pneumoniae).